The primary structure comprises 37 residues: Large ribosomal subunit protein bL36 (37 aa).

Belongs to the bacterial ribosomal protein bL36 family.

In Leptospira interrogans serogroup Icterohaemorrhagiae serovar Lai (strain 56601), this protein is Large ribosomal subunit protein bL36.